Here is a 267-residue protein sequence, read N- to C-terminus: Methylglyoxal reductase DkgB (267 aa).

The active-site Proton donor is Tyr-39. Substrate is bound at residue His-97. 179 to 231 (MTLAYGKALKDEVIARIAAKHNATPAQVILAWAMGEGYSVIPSSTRRENLASS) serves as a coordination point for NADP(+).

It belongs to the aldo/keto reductase family. In terms of assembly, monomer.

It localises to the cytoplasm. It carries out the reaction hydroxyacetone + NADP(+) = methylglyoxal + NADPH + H(+). Functionally, aldo-keto reductase that significantly contributes to cellular methylglyoxal detoxification by catalyzing the NADPH-dependent conversion of methylglyoxal to acetol. The protein is Methylglyoxal reductase DkgB of Salmonella typhimurium (strain LT2 / SGSC1412 / ATCC 700720).